Here is a 400-residue protein sequence, read N- to C-terminus: EARP-interacting protein homolog (400 aa).

A disordered region spans residues 95-114 (NNNSNNTNNNDNTNNNTNNN). Positions 96–114 (NNSNNTNNNDNTNNNTNNN) are enriched in low complexity. WD repeat units follow at residues 138–178 (GHTG…NEPT), 227–267 (AHSE…DPVK), and 271–311 (GHNH…SAFN). Residues 314–333 (NNISNSNEQQHSQQPNEQQP) show a composition bias toward low complexity. Residues 314–348 (NNISNSNEQQHSQQPNEQQPQQPPQPVKQKKNKRN) are disordered. One copy of the WD 4 repeat lies at 358–397 (EHEDSVYNISWSSSNFLFASLSYDGRFVVNNVPKEYSDIL).

Belongs to the WD repeat EIPR1 family.

This chain is EARP-interacting protein homolog, found in Dictyostelium discoideum (Social amoeba).